We begin with the raw amino-acid sequence, 299 residues long: N-acetylaspartate synthetase (299 aa).

Residues 44-57 (AAPGPAAAPPPAAG) are compositionally biased toward pro residues. A disordered region spans residues 44–70 (AAPGPAAAPPPAAGPQPHGGTGGAGPP). Over residues 60 to 70 (PHGGTGGAGPP) the composition is skewed to gly residues. A helical transmembrane segment spans residues 118–138 (YALLAALCFAVTRSLLLTCLV). The N-acetyltransferase domain occupies 143-280 (LALRYYYSRK…VLPGMTLSLA (138 aa)).

The protein belongs to the NAT8 family. As to expression, expressed in brain, kidney, liver and spleen. In brain, present in neurons but not in astrocytes (at protein level). Expressed in brain, thymus and spleen.

It is found in the cytoplasm. It localises to the microsome membrane. The protein resides in the mitochondrion membrane. The protein localises to the endoplasmic reticulum membrane. The enzyme catalyses L-aspartate + acetyl-CoA = N-acetyl-L-aspartate + CoA + H(+). Aminooxyacetic acid (AOAA) blocks its activity in both cytoplasm and mitochondria. Catalyzes the synthesis of N-acetylaspartate acid (NAA) from L-aspartate and acetyl-CoA. Promotes dopamine uptake by regulating TNF-alpha expression. Attenuates methamphetamine-induced inhibition of dopamine uptake. The sequence is that of N-acetylaspartate synthetase (Nat8l) from Mus musculus (Mouse).